Consider the following 329-residue polypeptide: Small ribosomal subunit protein uS2 (329 aa).

Belongs to the universal ribosomal protein uS2 family.

The sequence is that of Small ribosomal subunit protein uS2 from Bradyrhizobium sp. (strain ORS 278).